Here is a 339-residue protein sequence, read N- to C-terminus: MNTINASMTVIGAGSYGTALAITLARNGHHVVLWGHDPAHIATLQADRCNAAFLPDVPFPDTLHLESDLATALAASRNILVVVPSHVFGQVLRQIKPLMRPDARVVWATKGLEAETGRLLQDVAREALGDEIPLAVISGPTFAKELAAGLPTAISLAATDETFADDLQQLLHCGKSFRVYSNPDFIGVQLGGAVKNVIAIGAGMSDGIGFGANARTALITRGLAEMSRLGAALGADPTTFMGMAGLGDLVLTCTDNQSRNRRFGMMLGQGADVQSAQEKIGQVVEGYRNTKEVRELAARVGVEMPITEEIYQVLYCGKNAREAALTLLGRTRKDERSSQ.

4 residues coordinate NADPH: Ser-15, Tyr-16, His-36, and Lys-110. Positions 110, 139, and 141 each coordinate sn-glycerol 3-phosphate. Residue Ala-143 coordinates NADPH. Positions 195, 248, 258, 259, and 260 each coordinate sn-glycerol 3-phosphate. Catalysis depends on Lys-195, which acts as the Proton acceptor. Arg-259 serves as a coordination point for NADPH. Residues Val-283 and Glu-285 each contribute to the NADPH site.

The protein belongs to the NAD-dependent glycerol-3-phosphate dehydrogenase family.

Its subcellular location is the cytoplasm. The enzyme catalyses sn-glycerol 3-phosphate + NAD(+) = dihydroxyacetone phosphate + NADH + H(+). It carries out the reaction sn-glycerol 3-phosphate + NADP(+) = dihydroxyacetone phosphate + NADPH + H(+). It functions in the pathway membrane lipid metabolism; glycerophospholipid metabolism. In terms of biological role, catalyzes the reduction of the glycolytic intermediate dihydroxyacetone phosphate (DHAP) to sn-glycerol 3-phosphate (G3P), the key precursor for phospholipid synthesis. The chain is Glycerol-3-phosphate dehydrogenase [NAD(P)+] from Cronobacter sakazakii (strain ATCC BAA-894) (Enterobacter sakazakii).